A 56-amino-acid polypeptide reads, in one-letter code: UPF0339 protein NMA1193/NMA1859 (56 aa).

This sequence belongs to the UPF0339 family.

The sequence is that of UPF0339 protein NMA1193/NMA1859 from Neisseria meningitidis serogroup A / serotype 4A (strain DSM 15465 / Z2491).